Reading from the N-terminus, the 80-residue chain is Protein FAM229B (80 aa).

The segment at 1-45 (MPFRFGTQPRRFPVEGGDSSIELESGLSSSASCTGKETSPNRQLR) is disordered. The span at 15–32 (EGGDSSIELESGLSSSAS) shows a compositional bias: low complexity. Polar residues predominate over residues 33-42 (CTGKETSPNR).

It belongs to the FAM229 family.

This is Protein FAM229B (Fam229b) from Mus musculus (Mouse).